Consider the following 196-residue polypeptide: SPRY domain-containing protein 7 (196 aa).

Ala-2 is subject to N-acetylalanine. One can recognise a B30.2/SPRY domain in the interval 2 to 184 (ATSVLCCLRC…FSEFYHTPPP (183 aa)).

This Homo sapiens (Human) protein is SPRY domain-containing protein 7 (SPRYD7).